We begin with the raw amino-acid sequence, 268 residues long: MTLLNIAVAGSTGRMGRTIMETIADAQDLRLSAALEQPDSPYLSQDAGGLTGTPCGVIINSDYASALTGSDVLIDFTRPAGTLTHLAVCRQSGIHMVIGTTGFSAEEKEIIHDAAKDIAIVFAPNMSVGVNILFRLLEVAAKALPAGYDVEIIEAHHRHKVDAPSGTALRMGEVIAQTQGKNLEKVAIYGREGHTGERAADTIGFSTIRGGDIVGDHTALFAGIGERLEITHKASSRKTFATGALHAARFLATKKSGLFDMQDVLGLR.

NAD(+)-binding positions include 10-15 (GSTGRM), Glu-36, 99-101 (GTT), and 123-126 (APNM). The Proton donor/acceptor role is filled by His-156. His-157 lines the (S)-2,3,4,5-tetrahydrodipicolinate pocket. Lys-160 (proton donor) is an active-site residue. 166-167 (GT) contacts (S)-2,3,4,5-tetrahydrodipicolinate.

Belongs to the DapB family.

The protein resides in the cytoplasm. The enzyme catalyses (S)-2,3,4,5-tetrahydrodipicolinate + NAD(+) + H2O = (2S,4S)-4-hydroxy-2,3,4,5-tetrahydrodipicolinate + NADH + H(+). It catalyses the reaction (S)-2,3,4,5-tetrahydrodipicolinate + NADP(+) + H2O = (2S,4S)-4-hydroxy-2,3,4,5-tetrahydrodipicolinate + NADPH + H(+). It participates in amino-acid biosynthesis; L-lysine biosynthesis via DAP pathway; (S)-tetrahydrodipicolinate from L-aspartate: step 4/4. Catalyzes the conversion of 4-hydroxy-tetrahydrodipicolinate (HTPA) to tetrahydrodipicolinate. This Nitrosomonas eutropha (strain DSM 101675 / C91 / Nm57) protein is 4-hydroxy-tetrahydrodipicolinate reductase.